The primary structure comprises 185 residues: Ribosome-recycling factor (185 aa).

The protein belongs to the RRF family.

It localises to the cytoplasm. Responsible for the release of ribosomes from messenger RNA at the termination of protein biosynthesis. May increase the efficiency of translation by recycling ribosomes from one round of translation to another. The chain is Ribosome-recycling factor from Kineococcus radiotolerans (strain ATCC BAA-149 / DSM 14245 / SRS30216).